The sequence spans 194 residues: RNA polymerase II subunit A C-terminal domain phosphatase SSU72 like protein 5 (194 aa).

It belongs to the SSU72 phosphatase family.

The protein localises to the nucleus. The enzyme catalyses O-phospho-L-seryl-[protein] + H2O = L-seryl-[protein] + phosphate. It catalyses the reaction O-phospho-L-threonyl-[protein] + H2O = L-threonyl-[protein] + phosphate. Protein phosphatase that catalyzes the dephosphorylation of the C-terminal domain of RNA polymerase II. Plays a role in RNA processing and termination. The polypeptide is RNA polymerase II subunit A C-terminal domain phosphatase SSU72 like protein 5 (Homo sapiens (Human)).